The following is a 1040-amino-acid chain: Multidrug resistance protein MdtB (1040 aa).

Helical transmembrane passes span 16 to 36, 347 to 367, 369 to 389, 396 to 416, 440 to 460, 472 to 492, 537 to 557, 863 to 883, 888 to 908, 911 to 931, 968 to 988, and 998 to 1018; these read FIMRPVATTLLMVAILLAGII, LMMAITLVVMIIYLFLRNIPA, IIPGVAVPLSLIGTFAVMVFL, LTLMALTIATGFVVDDAIVVI, IGFTIISLTFSLIAVLIPLLF, FAITLAVAILISAVVSLTLTP, WLTLSVALSTLLLSVLLWVFI, LGSTVWLIVAAVVAMYIVLGI, FIHPITILSTLPTAGVGALLA, IAGSELDVIAIIGIILLIGIV, ILMTTLAALLGALPLMLSTGV, and IGMVGGLIVSQVLTLFTTPVI.

The protein belongs to the resistance-nodulation-cell division (RND) (TC 2.A.6) family. MdtB subfamily. Part of a tripartite efflux system composed of MdtA, MdtB and MdtC. MdtB forms a heteromultimer with MdtC.

Its subcellular location is the cell inner membrane. Its function is as follows. The MdtABC tripartite complex confers resistance against novobiocin and deoxycholate. The chain is Multidrug resistance protein MdtB from Escherichia coli O157:H7 (strain EC4115 / EHEC).